The following is a 235-amino-acid chain: MRSGLIAQKLGMTRVFTDEGEHVPVTVLKLDQVQVVAQRTEDRDGYTALQLGAGKAKVKNVAKAQREQFARAKVEPKKKLVEFRVTPDALIEVGAEITADHFVPGQFVDVTGTTIGRGFTGPMRRWNFGGLRATHGVSVSHRSHGSTGGRQDPGKTFKNKKMAGHYGVEKVTVQNLKVVQVDVERGLILVKGAIPGHEGGWVLIRDAVKKKLPDGAPFPGAIRAPAADTPAAQEG.

Positions 138–157 are disordered; sequence SVSHRSHGSTGGRQDPGKTF. Glutamine 151 carries the post-translational modification N5-methylglutamine.

This sequence belongs to the universal ribosomal protein uL3 family. In terms of assembly, part of the 50S ribosomal subunit. Forms a cluster with proteins L14 and L19. Methylated by PrmB.

Its function is as follows. One of the primary rRNA binding proteins, it binds directly near the 3'-end of the 23S rRNA, where it nucleates assembly of the 50S subunit. This Rhodospirillum centenum (strain ATCC 51521 / SW) protein is Large ribosomal subunit protein uL3.